A 901-amino-acid polypeptide reads, in one-letter code: HTH-type transcriptional regulator MalT (901 aa).

An ATP-binding site is contributed by S39–T46. Residues E829–L894 enclose the HTH luxR-type domain. The segment at residues N853 to R872 is a DNA-binding region (H-T-H motif).

The protein belongs to the MalT family. Monomer in solution. Oligomerizes to an active state in the presence of the positive effectors ATP and maltotriose.

Activated by ATP and maltotriose, which are both required for DNA binding. Functionally, positively regulates the transcription of the maltose regulon whose gene products are responsible for uptake and catabolism of malto-oligosaccharides. Specifically binds to the promoter region of its target genes, recognizing a short DNA motif called the MalT box. The polypeptide is HTH-type transcriptional regulator MalT (Escherichia coli (strain ATCC 8739 / DSM 1576 / NBRC 3972 / NCIMB 8545 / WDCM 00012 / Crooks)).